The chain runs to 217 residues: Protein-L-isoaspartate O-methyltransferase (217 aa).

Residue Ser-65 is part of the active site.

The protein belongs to the methyltransferase superfamily. L-isoaspartyl/D-aspartyl protein methyltransferase family.

The protein resides in the cytoplasm. The enzyme catalyses [protein]-L-isoaspartate + S-adenosyl-L-methionine = [protein]-L-isoaspartate alpha-methyl ester + S-adenosyl-L-homocysteine. Its function is as follows. Catalyzes the methyl esterification of L-isoaspartyl residues in peptides and proteins that result from spontaneous decomposition of normal L-aspartyl and L-asparaginyl residues. It plays a role in the repair and/or degradation of damaged proteins. The protein is Protein-L-isoaspartate O-methyltransferase of Chlorobium limicola (strain DSM 245 / NBRC 103803 / 6330).